We begin with the raw amino-acid sequence, 785 residues long: Disintegrin and metalloproteinase domain-containing protein B (785 aa).

A signal peptide spans 1-26 (MRFLKSALPFVASALSLLSVQAAARS). Residues 27 to 703 (QEPSAIQHVS…GSWVEQHKNL (677 aa)) are Extracellular-facing. In terms of domain architecture, Peptidase M12B spans 279-507 (KQVALVGIAA…NSVKSSCLSD (229 aa)). N-linked (GlcNAc...) asparagine glycans are attached at residues asparagine 322, asparagine 329, and asparagine 355. Intrachain disulfides connect cysteine 398/cysteine 492 and cysteine 446/cysteine 464. Histidine 429 is a Zn(2+) binding site. Glutamate 430 is a catalytic residue. Positions 433 and 439 each coordinate Zn(2+). One can recognise a Disintegrin domain in the interval 516–605 (GSQCGNGIVE…TCPADSFKKD (90 aa)). Asparagine 561, asparagine 593, and asparagine 640 each carry an N-linked (GlcNAc...) asparagine glycan. The cysteines at positions 577 and 597 are disulfide-linked. Residues 704–724 (VIGVACGVGGLLVLSILWCMI) traverse the membrane as a helical segment. Residues 725–785 (NRCRRARTVV…GPYQSATRYA (61 aa)) lie on the Cytoplasmic side of the membrane. The segment at 737–785 (PPMRPWPGPMPPPPPQMGQWAGPNRGYQGLRAEPPPPYPGPYQSATRYA) is disordered. A compositionally biased stretch (pro residues) spans 739-752 (MRPWPGPMPPPPPQ).

It depends on Zn(2+) as a cofactor.

It localises to the membrane. Probable zinc protease. In Aspergillus fumigatus (strain ATCC MYA-4609 / CBS 101355 / FGSC A1100 / Af293) (Neosartorya fumigata), this protein is Disintegrin and metalloproteinase domain-containing protein B (ADM-B).